Reading from the N-terminus, the 500-residue chain is ATP synthase subunit alpha (500 aa).

Residue 169-176 (GDRQTGKT) participates in ATP binding.

The protein belongs to the ATPase alpha/beta chains family. As to quaternary structure, F-type ATPases have 2 components, CF(1) - the catalytic core - and CF(0) - the membrane proton channel. CF(1) has five subunits: alpha(3), beta(3), gamma(1), delta(1), epsilon(1). CF(0) has three main subunits: a(1), b(2) and c(9-12). The alpha and beta chains form an alternating ring which encloses part of the gamma chain. CF(1) is attached to CF(0) by a central stalk formed by the gamma and epsilon chains, while a peripheral stalk is formed by the delta and b chains.

It localises to the cell membrane. It catalyses the reaction ATP + H2O + 4 H(+)(in) = ADP + phosphate + 5 H(+)(out). Functionally, produces ATP from ADP in the presence of a proton gradient across the membrane. The alpha chain is a regulatory subunit. This chain is ATP synthase subunit alpha, found in Lactococcus lactis subsp. cremoris (strain SK11).